Here is a 238-residue protein sequence, read N- to C-terminus: Small ribosomal subunit protein uS2 (238 aa).

This sequence belongs to the universal ribosomal protein uS2 family.

The chain is Small ribosomal subunit protein uS2 from Prochlorococcus marinus (strain SARG / CCMP1375 / SS120).